A 185-amino-acid polypeptide reads, in one-letter code: Threonylcarbamoyl-AMP synthase (185 aa).

In terms of domain architecture, YrdC-like spans 3 to 185 (EQAPDEVQEI…VDAISGKVLR (183 aa)).

This sequence belongs to the SUA5 family. TsaC subfamily.

It is found in the cytoplasm. The catalysed reaction is L-threonine + hydrogencarbonate + ATP = L-threonylcarbamoyladenylate + diphosphate + H2O. Required for the formation of a threonylcarbamoyl group on adenosine at position 37 (t(6)A37) in tRNAs that read codons beginning with adenine. Catalyzes the conversion of L-threonine, HCO(3)(-)/CO(2) and ATP to give threonylcarbamoyl-AMP (TC-AMP) as the acyladenylate intermediate, with the release of diphosphate. This Shewanella sediminis (strain HAW-EB3) protein is Threonylcarbamoyl-AMP synthase.